A 209-amino-acid chain; its full sequence is Adenylate kinase (209 aa).

59 to 64 (GSGKRT) is an ATP binding site. Residues 79–108 (SSGQVLTRGVESGSETSQLAHSYVSRGERV) form an NMP region. AMP contacts are provided by residues serine 80, 106 to 108 (ERV), 135 to 138 (GYPR), and glutamine 142. Residues 172–205 (HRRYDPATNKXYHMLDNPPPGGRCRVMRTAPAEG) form an LID region. ATP is bound at residue arginine 173.

This sequence belongs to the adenylate kinase family. As to quaternary structure, monomer.

Its subcellular location is the cytoplasm. The enzyme catalyses AMP + ATP = 2 ADP. Functionally, catalyzes the reversible transfer of the terminal phosphate group between ATP and AMP. Plays an important role in cellular energy homeostasis and in adenine nucleotide metabolism. This Trypanosoma brucei rhodesiense protein is Adenylate kinase.